A 362-amino-acid chain; its full sequence is 3-dehydroquinate synthase (362 aa).

Residues 70-75 (DGESYK), 104-108 (GVVGD), 128-129 (TT), Lys-141, and Lys-150 contribute to the NAD(+) site. Zn(2+) is bound by residues Glu-183, His-246, and His-263.

The protein belongs to the sugar phosphate cyclases superfamily. Dehydroquinate synthase family. Requires Co(2+) as cofactor. The cofactor is Zn(2+). NAD(+) serves as cofactor.

The protein localises to the cytoplasm. The catalysed reaction is 7-phospho-2-dehydro-3-deoxy-D-arabino-heptonate = 3-dehydroquinate + phosphate. Its pathway is metabolic intermediate biosynthesis; chorismate biosynthesis; chorismate from D-erythrose 4-phosphate and phosphoenolpyruvate: step 2/7. In terms of biological role, catalyzes the conversion of 3-deoxy-D-arabino-heptulosonate 7-phosphate (DAHP) to dehydroquinate (DHQ). The protein is 3-dehydroquinate synthase of Saccharophagus degradans (strain 2-40 / ATCC 43961 / DSM 17024).